The primary structure comprises 136 residues: Ribosome-binding factor A (136 aa).

The tract at residues 1–22 (MNTAGPAGKLAGHAASGPTQRQ) is disordered.

The protein belongs to the RbfA family. As to quaternary structure, monomer. Binds 30S ribosomal subunits, but not 50S ribosomal subunits or 70S ribosomes.

The protein resides in the cytoplasm. Functionally, one of several proteins that assist in the late maturation steps of the functional core of the 30S ribosomal subunit. Associates with free 30S ribosomal subunits (but not with 30S subunits that are part of 70S ribosomes or polysomes). Required for efficient processing of 16S rRNA. May interact with the 5'-terminal helix region of 16S rRNA. The sequence is that of Ribosome-binding factor A from Gluconacetobacter diazotrophicus (strain ATCC 49037 / DSM 5601 / CCUG 37298 / CIP 103539 / LMG 7603 / PAl5).